The chain runs to 348 residues: Sulfate/thiosulfate import ATP-binding protein CysA (348 aa).

An ABC transporter domain is found at 3-237 (IEVRNIVKEF…PASAFVHGFI (235 aa)). 35–42 (GPSGSGKT) contributes to the ATP binding site.

It belongs to the ABC transporter superfamily. Sulfate/tungstate importer (TC 3.A.1.6) family. In terms of assembly, the complex is composed of two ATP-binding proteins (CysA), two transmembrane proteins (CysT and CysW) and a solute-binding protein (CysP).

The protein resides in the cell inner membrane. The enzyme catalyses sulfate(out) + ATP + H2O = sulfate(in) + ADP + phosphate + H(+). The catalysed reaction is thiosulfate(out) + ATP + H2O = thiosulfate(in) + ADP + phosphate + H(+). In terms of biological role, part of the ABC transporter complex CysAWTP involved in sulfate/thiosulfate import. Responsible for energy coupling to the transport system. This chain is Sulfate/thiosulfate import ATP-binding protein CysA, found in Rhodopseudomonas palustris (strain ATCC BAA-98 / CGA009).